We begin with the raw amino-acid sequence, 304 residues long: Lipid droplet-associated hydrolase (304 aa).

Ser-119 (nucleophile) is an active-site residue. Active-site charge relay system residues include Asp-250 and His-279.

The protein belongs to the AB hydrolase superfamily. LDAH family.

Its subcellular location is the lipid droplet. The enzyme catalyses a cholesterol ester + H2O = cholesterol + a fatty acid + H(+). Probable serine lipid hydrolase associated with lipid droplets. Has low cholesterol esterase activity. Appears to lack triglyceride lipase activity. Involved in cholesterol and triglyceride homeostasis; stimulates cellular triglyceride accumulation and cellular cholesterol release. This Dictyostelium discoideum (Social amoeba) protein is Lipid droplet-associated hydrolase.